A 593-amino-acid chain; its full sequence is Arginine--tRNA ligase (593 aa).

The short motif at 138–148 (ANPTGPLHVGH) is the 'HIGH' region element.

This sequence belongs to the class-I aminoacyl-tRNA synthetase family. Monomer.

It localises to the cytoplasm. The catalysed reaction is tRNA(Arg) + L-arginine + ATP = L-arginyl-tRNA(Arg) + AMP + diphosphate. In Burkholderia lata (strain ATCC 17760 / DSM 23089 / LMG 22485 / NCIMB 9086 / R18194 / 383), this protein is Arginine--tRNA ligase.